Reading from the N-terminus, the 276-residue chain is NAD kinase (276 aa).

Catalysis depends on aspartate 61, which acts as the Proton acceptor. NAD(+) contacts are provided by residues aspartate 61–glycine 62, asparagine 134–aspartate 135, arginine 145, lysine 162, aspartate 164, valine 172, threonine 175–serine 180, and glutamine 234.

Belongs to the NAD kinase family. A divalent metal cation is required as a cofactor.

It localises to the cytoplasm. It catalyses the reaction NAD(+) + ATP = ADP + NADP(+) + H(+). Its function is as follows. Involved in the regulation of the intracellular balance of NAD and NADP, and is a key enzyme in the biosynthesis of NADP. Catalyzes specifically the phosphorylation on 2'-hydroxyl of the adenosine moiety of NAD to yield NADP. In Clostridium perfringens (strain 13 / Type A), this protein is NAD kinase.